The sequence spans 487 residues: GTPase Der (487 aa).

EngA-type G domains follow at residues 3 to 166 (PVIA…PRDA) and 193 to 366 (IKIA…KSAV). GTP contacts are provided by residues 9 to 16 (GRPNVGKS), 56 to 60 (DTGGI), 118 to 121 (NKID), 199 to 206 (GRPNVGKS), 246 to 250 (DTAGV), and 311 to 314 (NKWD). Positions 367-451 (TRWPTSRLTQ…PIRIEYKGGE (85 aa)) constitute a KH-like domain. Residues 448-461 (KGGENPYEGKKNTL) show a composition bias toward basic and acidic residues. A disordered region spans residues 448–487 (KGGENPYEGKKNTLTDRQVNKKRRLMSHHKKAEKKRRDKR). A compositionally biased stretch (basic residues) spans 467–487 (NKKRRLMSHHKKAEKKRRDKR).

It belongs to the TRAFAC class TrmE-Era-EngA-EngB-Septin-like GTPase superfamily. EngA (Der) GTPase family. In terms of assembly, associates with the 50S ribosomal subunit.

Functionally, GTPase that plays an essential role in the late steps of ribosome biogenesis. This is GTPase Der from Pseudomonas putida (strain W619).